Reading from the N-terminus, the 407-residue chain is Myeloid cell nuclear differentiation antigen (407 aa).

Residues 1–88 (MANEYKKILL…VNNLRKERSK (88 aa)) enclose the Pyrin domain. Residues 122 to 211 (LTSEVGERIP…TRRNVPQKDP (90 aa)) form a disordered region. The Nuclear localization signal motif lies at 131-137 (PVAQKRK). A compositionally biased stretch (low complexity) spans 177–199 (HTSSSTPSNTSFAQNQQTQAQCQ). In terms of domain architecture, HIN-200 spans 196-394 (AQCQVDTRRN…CGSHSFIKVI (199 aa)).

As to quaternary structure, participates in a ternary complex with YY1 and the YY1 target DNA element. Binds nucleolin and nucleophosmin/NPM/B23.

The protein localises to the nucleus. Its subcellular location is the cytoplasm. May act as a transcriptional activator/repressor in the myeloid lineage. Plays a role in the granulocyte/monocyte cell-specific response to interferon. Stimulates the DNA binding of the transcriptional repressor protein YY1. The sequence is that of Myeloid cell nuclear differentiation antigen (MNDA) from Macaca fascicularis (Crab-eating macaque).